A 295-amino-acid polypeptide reads, in one-letter code: Sulfotransferase 1A3 (295 aa).

48–53 (KSGTTW) provides a ligand contact to 3'-phosphoadenylyl sulfate. Residues D86 and 106–108 (KSH) each bind dopamine. Catalysis depends on H108, which acts as the Proton acceptor. 3'-phosphoadenylyl sulfate contacts are provided by R130 and S138. Dopamine is bound at residue E146. 3'-phosphoadenylyl sulfate-binding positions include Y193, 227-232 (TSFKEM), and 257-259 (RKG).

It belongs to the sulfotransferase 1 family. In terms of assembly, homodimer. The N-terminus is blocked. Liver, colon, kidney, lung, brain, spleen, small intestine, placenta and leukocyte.

It is found in the cytoplasm. The catalysed reaction is a phenol + 3'-phosphoadenylyl sulfate = an aryl sulfate + adenosine 3',5'-bisphosphate + H(+). The enzyme catalyses 4-nitrophenol + 3'-phosphoadenylyl sulfate = 4-nitrophenyl sulfate + adenosine 3',5'-bisphosphate. It catalyses the reaction dopamine + 3'-phosphoadenylyl sulfate = dopamine 3-O-sulfate + adenosine 3',5'-bisphosphate + H(+). It carries out the reaction dopamine + 3'-phosphoadenylyl sulfate = dopamine 4-O-sulfate + adenosine 3',5'-bisphosphate + H(+). The catalysed reaction is serotonin + 3'-phosphoadenylyl sulfate = serotonin O-sulfate + adenosine 3',5'-bisphosphate + H(+). The enzyme catalyses (R)-adrenaline + 3'-phosphoadenylyl sulfate = (R)-adrenaline 4'-O-sulfate + adenosine 3',5'-bisphosphate + H(+). It catalyses the reaction (R)-noradrenaline + 3'-phosphoadenylyl sulfate = (R)-noradrenaline 4'-O-sulfate + adenosine 3',5'-bisphosphate + H(+). It carries out the reaction 3,3',5-triiodo-L-thyronine + 3'-phosphoadenylyl sulfate = 3,3',5-triiodo-L-thyronine sulfate + adenosine 3',5'-bisphosphate + H(+). The catalysed reaction is 3,3',5'-triiodo-L-thyronine + 3'-phosphoadenylyl sulfate = 3,3',5'-triiodo-L-thyronine sulfate + adenosine 3',5'-bisphosphate + H(+). The enzyme catalyses 3,3'-diiodo-L-thyronine + 3'-phosphoadenylyl sulfate = 3,3'-diiodo-L-thyronine sulfate + adenosine 3',5'-bisphosphate + H(+). It catalyses the reaction L-thyroxine + 3'-phosphoadenylyl sulfate = L-thyroxine sulfate + adenosine 3',5'-bisphosphate + H(+). Its function is as follows. Sulfotransferase that utilizes 3'-phospho-5'-adenylyl sulfate (PAPS) as sulfonate donor to catalyze the sulfate conjugation of phenolic monoamines (neurotransmitters such as dopamine, (R)-adrenaline/epinephrine, (R)-noradrenaline/norepinephrine and serotonin) and phenolic and catechol drugs. Catalyzes the sulfation of T4 (L-thyroxine/3,5,3',5'-tetraiodothyronine), T3 (3,5,3'-triiodothyronine), rT3 (3,3',5'-triiodothyronine) and 3,3'-T2 (3,3'-diiodothyronine), with a substrate preference of 3,3'-T2 &gt; rT3 &gt; T3 &gt; T4. This is Sulfotransferase 1A3 (SULT1A3) from Homo sapiens (Human).